Consider the following 656-residue polypeptide: uncharacterized protein (656 aa).

Disordered regions lie at residues 1-41 (MMAT…ESEG) and 60-88 (SNKV…HNLE). Over residues 22-36 (SDSSDSGSDVSFFSV) the composition is skewed to low complexity. The residue at position 39 (S39) is a Phosphoserine. The segment covering 62–78 (KVEKDSDSEQRGRKKET) has biased composition (basic and acidic residues).

The protein localises to the cytoplasm. It is found in the mitochondrion. This is an uncharacterized protein from Saccharomyces cerevisiae (strain ATCC 204508 / S288c) (Baker's yeast).